Consider the following 120-residue polypeptide: Large ribosomal subunit protein bL20 (120 aa).

The protein belongs to the bacterial ribosomal protein bL20 family.

Functionally, binds directly to 23S ribosomal RNA and is necessary for the in vitro assembly process of the 50S ribosomal subunit. It is not involved in the protein synthesizing functions of that subunit. This is Large ribosomal subunit protein bL20 from Pseudoalteromonas translucida (strain TAC 125).